A 261-amino-acid polypeptide reads, in one-letter code: Dienlactone hydrolase 1 (261 aa).

Residues Cys147, Asp194, and His226 contribute to the active site.

The protein belongs to the dienelactone hydrolase family.

It participates in xenobiotic degradation. In terms of biological role, dienlactone hydrolase; part of the Fusarium detoxification of benzoxazolinone cluster 1 (FDB1) involved in the degradation of benzoxazolinones produced by the host plant. Maize, wheat, and rye produce the 2 benzoxazinone phytoanticipins 2,4-dihy-droxy-7-methoxy-1,4-benzoxazin-3-one (DIMBOA) and 2,4-dihydroxy-1,4-benzoxazin-3-one (DIBOA) that, due to their inherent instability once released, spontaneously degrade to the more stable corresponding benzoxazolinones, 6-methoxy-2-benzoxazolinone (MBOA) and 2-benzoxazolinone (BOA), respectively. The first step in the detoxification of benzoxazolinones involves the hydrolysis of the cyclic ester bond of benzoxazolinones by the FDB1 cluster gamma-lactamase MBL1 to aminophenols. MBL1 is able to convert BOA into 2-aminophenol (2-AP), as well as MBOA into 5-methoxy-2-aminophenol (2-AMP). The FDB2 cluster N-malonyltransferase FDB2/NAT1 then metabolizes aminophenols via N-malonylation to non-toxic malonamic acids. FDB2/NAT1 converts 2-AP into N-(2-hydroxyphenyl) malonamic acid (HPMA) and 2-AMP into N-(2-hydroxy-4-methoxyphenyl) malonamic acid (HMPMA). The duplicated dienlactone hydrolases DLH1 and DLH2 may provide redundant function for hydrolyzing the lactone moiety in the BOA molecule. The roles of the amidases and other enzymes encoded by the 2 FDB clusters have not been identified so far. The protein is Dienlactone hydrolase 1 of Gibberella moniliformis (strain M3125 / FGSC 7600) (Maize ear and stalk rot fungus).